The following is a 339-amino-acid chain: MTPHTHVRGPGDILQLTMAFYGSRALISAVELDLFTLLAGKPLPLGELCERAGIHPRGARDFLDALVALGLLEREGEDTYRNSPAADRHLDRRKPGYVGGYARLADTKLFPVWARLTEALRTGEKQVPSQGGFFGGYADPEAARGFLGAMDAVNGGVGHSLAGALDWTEYSSFVDLGGARGNLAAHLHRAHPHLRATCFDLPEMEPFFQEHMKSLETTDQVRFAGGDFFTDPLPRADVFIVGHILHYFGLRQREALIARIHQALTPGGAVLVYDRMIDDDRRSAALSLLGSLNMLLTSDEGREYTPAECVRWLSDAGFTDVRTTAVSGPDTLAIGRKPR.

S-adenosyl-L-methionine is bound by residues Asp-200 and 226–228 (GDF). His-246 functions as the Proton acceptor in the catalytic mechanism.

Belongs to the class I-like SAM-binding methyltransferase superfamily. Cation-independent O-methyltransferase family.

It participates in antibiotic biosynthesis; tetracenomycin C biosynthesis. This chain is Tetracenomycin polyketide synthesis 8-O-methyl transferase TcmO (tcmO), found in Streptomyces glaucescens.